Reading from the N-terminus, the 535-residue chain is Glucose-6-phosphate isomerase (535 aa).

The active-site Proton donor is the Glu347. Residues His378 and Lys493 contribute to the active site.

Belongs to the GPI family.

It localises to the cytoplasm. The enzyme catalyses alpha-D-glucose 6-phosphate = beta-D-fructose 6-phosphate. The protein operates within carbohydrate biosynthesis; gluconeogenesis. It participates in carbohydrate degradation; glycolysis; D-glyceraldehyde 3-phosphate and glycerone phosphate from D-glucose: step 2/4. In terms of biological role, catalyzes the reversible isomerization of glucose-6-phosphate to fructose-6-phosphate. The protein is Glucose-6-phosphate isomerase of Chlamydia felis (strain Fe/C-56) (Chlamydophila felis).